A 401-amino-acid chain; its full sequence is Argininosuccinate synthase (401 aa).

9-17 (AYSGGLDTS) contributes to the ATP binding site. Y86 is an L-citrulline binding site. Residue G116 participates in ATP binding. 3 residues coordinate L-aspartate: T118, N122, and D123. N122 provides a ligand contact to L-citrulline. Residues R126, S174, S183, E259, and Y271 each contribute to the L-citrulline site.

Belongs to the argininosuccinate synthase family. Type 1 subfamily. As to quaternary structure, homotetramer.

The protein localises to the cytoplasm. It carries out the reaction L-citrulline + L-aspartate + ATP = 2-(N(omega)-L-arginino)succinate + AMP + diphosphate + H(+). It participates in amino-acid biosynthesis; L-arginine biosynthesis; L-arginine from L-ornithine and carbamoyl phosphate: step 2/3. In Bacillus cytotoxicus (strain DSM 22905 / CIP 110041 / 391-98 / NVH 391-98), this protein is Argininosuccinate synthase.